A 571-amino-acid chain; its full sequence is Streptolysin O (571 aa).

A signal peptide spans M1–S33. 2 disordered regions span residues E32–E56 and K81–E108. Positions N37–E48 are enriched in low complexity. The next 4 beta stranded transmembrane spans lie at K260–I273, I280–E289, S358–A367, and K375–S387. A Conserved undecapeptide motif is present at residues E529–R539. Residue T561 is a short sequence motif, cholesterol binding.

The protein belongs to the cholesterol-dependent cytolysin family. Homooligomeric pore complex of 35 to 50 subunits; when inserted in the host membrane.

It localises to the secreted. Its subcellular location is the host cell membrane. Functionally, a cholesterol-dependent toxin that causes cytolysis by forming pores in cholesterol containing host membranes. After binding to target membranes, the protein undergoes a major conformation change, leading to its insertion in the host membrane and formation of an oligomeric pore complex. Cholesterol is required for binding to host membranes, membrane insertion and pore formation; cholesterol binding is mediated by a Thr-Leu pair in the C-terminus. Can be reversibly inactivated by oxidation. This chain is Streptolysin O (slo), found in Streptococcus pyogenes serotype M6 (strain ATCC BAA-946 / MGAS10394).